Reading from the N-terminus, the 253-residue chain is AA9 family lytic polysaccharide monooxygenase F (253 aa).

Residues 1 to 16 (MKVLATLLASVGLVAA) form the signal peptide. Position 17 (histidine 17) interacts with Cu(2+). An N-linked (GlcNAc...) asparagine glycan is attached at asparagine 22. Intrachain disulfides connect cysteine 75-cysteine 193 and cysteine 163-cysteine 253. Histidine 105 lines the Cu(2+) pocket. Residue asparagine 143 is glycosylated (N-linked (GlcNAc...) asparagine). O2 is bound by residues histidine 179 and glutamine 188. Tyrosine 190 contacts Cu(2+).

This sequence belongs to the polysaccharide monooxygenase AA9 family. Requires Cu(2+) as cofactor.

Its subcellular location is the secreted. The enzyme catalyses [(1-&gt;4)-beta-D-glucosyl]n+m + reduced acceptor + O2 = 4-dehydro-beta-D-glucosyl-[(1-&gt;4)-beta-D-glucosyl]n-1 + [(1-&gt;4)-beta-D-glucosyl]m + acceptor + H2O.. Lytic polysaccharide monooxygenase (LPMO) that depolymerizes crystalline and amorphous polysaccharides via the oxidation of scissile alpha- or beta-(1-4)-glycosidic bonds, yielding C1 or C4 oxidation products. Catalysis by LPMOs requires the reduction of the active-site copper from Cu(II) to Cu(I) by a reducing agent and H(2)O(2) or O(2) as a cosubstrate. The chain is AA9 family lytic polysaccharide monooxygenase F from Podospora anserina (strain S / ATCC MYA-4624 / DSM 980 / FGSC 10383) (Pleurage anserina).